The following is a 265-amino-acid chain: Type III pantothenate kinase (265 aa).

Residue 6–13 (DVGNTHTV) participates in ATP binding. Residue 112 to 115 (GADR) coordinates substrate. The active-site Proton acceptor is the aspartate 114. Aspartate 134 contributes to the K(+) binding site. Threonine 137 is an ATP binding site. Residue threonine 189 participates in substrate binding.

It belongs to the type III pantothenate kinase family. In terms of assembly, homodimer. Requires NH4(+) as cofactor. K(+) is required as a cofactor.

Its subcellular location is the cytoplasm. It catalyses the reaction (R)-pantothenate + ATP = (R)-4'-phosphopantothenate + ADP + H(+). It participates in cofactor biosynthesis; coenzyme A biosynthesis; CoA from (R)-pantothenate: step 1/5. Catalyzes the phosphorylation of pantothenate (Pan), the first step in CoA biosynthesis. This Streptomyces griseus subsp. griseus (strain JCM 4626 / CBS 651.72 / NBRC 13350 / KCC S-0626 / ISP 5235) protein is Type III pantothenate kinase.